The sequence spans 274 residues: uncharacterized protein (274 aa).

104-111 (GVFAIGKS) serves as a coordination point for ATP.

This is an uncharacterized protein from Mycoplasma genitalium (strain ATCC 33530 / DSM 19775 / NCTC 10195 / G37) (Mycoplasmoides genitalium).